An 887-amino-acid polypeptide reads, in one-letter code: Leucine--tRNA ligase (887 aa).

Positions 48–58 match the 'HIGH' region motif; that stretch reads PYPSGKLHMGH. A 'KMSKS' region motif is present at residues 644–648; the sequence is TMSKS. Lys-647 provides a ligand contact to ATP.

Belongs to the class-I aminoacyl-tRNA synthetase family.

It is found in the cytoplasm. The catalysed reaction is tRNA(Leu) + L-leucine + ATP = L-leucyl-tRNA(Leu) + AMP + diphosphate. This is Leucine--tRNA ligase from Leptothrix cholodnii (strain ATCC 51168 / LMG 8142 / SP-6) (Leptothrix discophora (strain SP-6)).